Here is a 281-residue protein sequence, read N- to C-terminus: MGQKINPHGFRLGITTGWKSRWYADKQYAEYVKEDVAIRRLLSTGLERAGIADVEIERTRDRVRVDIHTARPGIVIGRRGTEADRIRADLEKLTCKQVQLNILEVKNPESQAQLVAQGVAEQLSNRVAFRRAMRKAIQSAMRQPNVKGIRVQCSGRLGGAEMSRSEFYREGRVPLHTLRADIDYGLHEAKTTFGRIGVKVWIYKGDIVGGKREVTAVAPAGAERARRERPSGTRPRRSGAAGTTVTGTDAGRAVGGEESAATNIGHSDDSVVTHEPQIAES.

The KH type-2 domain maps to 38–106 (IRRLLSTGLE…QVQLNILEVK (69 aa)). Residues 218-281 (APAGAERARR…VTHEPQIAES (64 aa)) form a disordered region. Residues 238-252 (SGAAGTTVTGTDAGR) are compositionally biased toward low complexity.

This sequence belongs to the universal ribosomal protein uS3 family. Part of the 30S ribosomal subunit. Forms a tight complex with proteins S10 and S14.

Its function is as follows. Binds the lower part of the 30S subunit head. Binds mRNA in the 70S ribosome, positioning it for translation. The polypeptide is Small ribosomal subunit protein uS3 (Mycobacterium leprae (strain TN)).